Consider the following 205-residue polypeptide: Regulator of G-protein signaling 4 (205 aa).

S-palmitoyl cysteine attachment occurs at residues C2, C12, and C95. An RGS domain is found at 62-178 (SLENLISHEC…LKSRFYLDLV (117 aa)).

Palmitoylated on Cys-2 and/or Cys-12. In terms of processing, phosphorylated by cyclic GMP-dependent protein kinase.

Its function is as follows. Inhibits signal transduction by increasing the GTPase activity of G protein alpha subunits thereby driving them into their inactive GDP-bound form. Activity on G(z)-alpha is inhibited by phosphorylation of the G-protein. Activity on G(z)-alpha and G(i)-alpha-1 is inhibited by palmitoylation of the G-protein. The chain is Regulator of G-protein signaling 4 (RGS4) from Pongo abelii (Sumatran orangutan).